Reading from the N-terminus, the 61-residue chain is Small ribosomal subunit protein uS14 (61 aa).

Residues Cys24, Cys27, Cys40, and Cys43 each coordinate Zn(2+).

Belongs to the universal ribosomal protein uS14 family. Zinc-binding uS14 subfamily. Part of the 30S ribosomal subunit. Contacts proteins S3 and S10. The cofactor is Zn(2+).

Binds 16S rRNA, required for the assembly of 30S particles and may also be responsible for determining the conformation of the 16S rRNA at the A site. The protein is Small ribosomal subunit protein uS14 of Mycoplasmoides gallisepticum (strain R(low / passage 15 / clone 2)) (Mycoplasma gallisepticum).